The primary structure comprises 427 residues: Dihydroorotase (427 aa).

Residues H60 and H62 each contribute to the Zn(2+) site. Substrate-binding positions include 62–64 and N94; that span reads HLR. 3 residues coordinate Zn(2+): D152, H179, and H232. Position 278 (N278) interacts with substrate. D305 contacts Zn(2+). D305 is a catalytic residue. Substrate contacts are provided by residues H309 and 323-324; that span reads FG.

This sequence belongs to the metallo-dependent hydrolases superfamily. DHOase family. Class I DHOase subfamily. Zn(2+) is required as a cofactor.

It catalyses the reaction (S)-dihydroorotate + H2O = N-carbamoyl-L-aspartate + H(+). It functions in the pathway pyrimidine metabolism; UMP biosynthesis via de novo pathway; (S)-dihydroorotate from bicarbonate: step 3/3. In terms of biological role, catalyzes the reversible cyclization of carbamoyl aspartate to dihydroorotate. This Geobacillus sp. (strain WCH70) protein is Dihydroorotase.